The primary structure comprises 436 residues: 3-ketoacyl-CoA thiolase (436 aa).

Cys99 serves as the catalytic Acyl-thioester intermediate. Active-site proton acceptor residues include His392 and Cys422.

Belongs to the thiolase-like superfamily. Thiolase family. In terms of assembly, heterotetramer of two alpha chains (FadJ) and two beta chains (FadI).

Its subcellular location is the cytoplasm. It carries out the reaction an acyl-CoA + acetyl-CoA = a 3-oxoacyl-CoA + CoA. It functions in the pathway lipid metabolism; fatty acid beta-oxidation. Its function is as follows. Catalyzes the final step of fatty acid oxidation in which acetyl-CoA is released and the CoA ester of a fatty acid two carbons shorter is formed. This chain is 3-ketoacyl-CoA thiolase, found in Salmonella newport (strain SL254).